A 219-amino-acid chain; its full sequence is Large ribosomal subunit protein uL3 (219 aa).

Residues 140–163 (SASHGAHRNHRKPGSIGASSTPSR) form a disordered region.

It belongs to the universal ribosomal protein uL3 family. As to quaternary structure, part of the 50S ribosomal subunit. Forms a cluster with proteins L14 and L19.

Functionally, one of the primary rRNA binding proteins, it binds directly near the 3'-end of the 23S rRNA, where it nucleates assembly of the 50S subunit. The sequence is that of Large ribosomal subunit protein uL3 from Leifsonia xyli subsp. xyli (strain CTCB07).